The following is a 198-amino-acid chain: SOSS complex subunit B2 (198 aa).

The OB DNA-binding region spans 26–89 (IVLEIGRVTK…SMWKGCLTLY (64 aa)). The tract at residues 114 to 198 (EPNPDYRGQQ…ARDPRRAFKR (85 aa)) is disordered. 2 stretches are compositionally biased toward polar residues: residues 136–151 (STNT…QTGP) and 173–188 (LPGT…TISN).

The protein belongs to the SOSS-B family. SOSS-B2 subfamily. In terms of assembly, component of the SOSS complex, composed of SOSS-B (SOSS-B1/NABP2 or SOSS-B2/NABP1), SOSS-A/INTS3 and SOSS-C/INIP. SOSS complexes containing SOSS-B1/NABP2 are more abundant than complexes containing SOSS-B2/NABP1. In terms of tissue distribution, ubiquitous with high expression in the thymus.

Its subcellular location is the nucleus. Functionally, component of the SOSS complex, a multiprotein complex that functions downstream of the MRN complex to promote DNA repair and G2/M checkpoint. In the SOSS complex, acts as a sensor of single-stranded DNA that binds to single-stranded DNA, in particular to polypyrimidines. The SOSS complex associates with DNA lesions and influences diverse endpoints in the cellular DNA damage response including cell-cycle checkpoint activation, recombinational repair and maintenance of genomic stability. Required for efficient homologous recombination-dependent repair of double-strand breaks (DSBs) and ATM-dependent signaling pathways. This Mus musculus (Mouse) protein is SOSS complex subunit B2 (Nabp1).